Reading from the N-terminus, the 380-residue chain is 1-deoxy-D-xylulose 5-phosphate reductoisomerase (380 aa).

NADPH is bound by residues Ser-10, Gly-11, Ser-12, Ile-13, Gly-36, Lys-37, Asn-38, and Asn-120. Residue Lys-121 participates in 1-deoxy-D-xylulose 5-phosphate binding. Residue Glu-122 participates in NADPH binding. Asp-146 serves as a coordination point for Mn(2+). 1-deoxy-D-xylulose 5-phosphate is bound by residues Ser-147, Glu-148, Ser-172, and His-195. Glu-148 serves as a coordination point for Mn(2+). Gly-201 serves as a coordination point for NADPH. 4 residues coordinate 1-deoxy-D-xylulose 5-phosphate: Ser-208, Asn-213, Lys-214, and Glu-217. Glu-217 is a binding site for Mn(2+).

Belongs to the DXR family. Mg(2+) is required as a cofactor. Mn(2+) serves as cofactor.

It catalyses the reaction 2-C-methyl-D-erythritol 4-phosphate + NADP(+) = 1-deoxy-D-xylulose 5-phosphate + NADPH + H(+). The protein operates within isoprenoid biosynthesis; isopentenyl diphosphate biosynthesis via DXP pathway; isopentenyl diphosphate from 1-deoxy-D-xylulose 5-phosphate: step 1/6. Functionally, catalyzes the NADPH-dependent rearrangement and reduction of 1-deoxy-D-xylulose-5-phosphate (DXP) to 2-C-methyl-D-erythritol 4-phosphate (MEP). The chain is 1-deoxy-D-xylulose 5-phosphate reductoisomerase from Bacillus cereus (strain AH187).